An 86-amino-acid polypeptide reads, in one-letter code: Translation initiation factor IF-1 2 (86 aa).

Positions 1-72 (MAKEELLEME…SKGRITFRHI (72 aa)) constitute an S1-like domain.

It belongs to the IF-1 family. Component of the 30S ribosomal translation pre-initiation complex which assembles on the 30S ribosome in the order IF-2 and IF-3, IF-1 and N-formylmethionyl-tRNA(fMet); mRNA recruitment can occur at any time during PIC assembly.

The protein localises to the cytoplasm. One of the essential components for the initiation of protein synthesis. Stabilizes the binding of IF-2 and IF-3 on the 30S subunit to which N-formylmethionyl-tRNA(fMet) subsequently binds. Helps modulate mRNA selection, yielding the 30S pre-initiation complex (PIC). Upon addition of the 50S ribosomal subunit IF-1, IF-2 and IF-3 are released leaving the mature 70S translation initiation complex. The sequence is that of Translation initiation factor IF-1 2 from Polynucleobacter asymbioticus (strain DSM 18221 / CIP 109841 / QLW-P1DMWA-1) (Polynucleobacter necessarius subsp. asymbioticus).